A 91-amino-acid polypeptide reads, in one-letter code: Putative pterin-4-alpha-carbinolamine dehydratase (91 aa).

Belongs to the pterin-4-alpha-carbinolamine dehydratase family.

The catalysed reaction is (4aS,6R)-4a-hydroxy-L-erythro-5,6,7,8-tetrahydrobiopterin = (6R)-L-erythro-6,7-dihydrobiopterin + H2O. This chain is Putative pterin-4-alpha-carbinolamine dehydratase, found in Halobacterium salinarum (strain ATCC 29341 / DSM 671 / R1).